Here is a 312-residue protein sequence, read N- to C-terminus: Olfactory receptor 6Z7 (312 aa).

Over 1–29 (MERSLALANMTRVQQFILLGLSTRLDIRD) the chain is Extracellular. The N-linked (GlcNAc...) asparagine glycan is linked to asparagine 9. The chain crosses the membrane as a helical span at residues 30–50 (ALFAVFLTLYLLTLLENTLII). Over 51–69 (YLICSHKELHKPMYFFLGN) the chain is Cytoplasmic. The chain crosses the membrane as a helical span at residues 70–90 (LSCLEMCYVSVTMPTLLMGLW). Asparagine 91 is a topological domain (extracellular). The helical transmembrane segment at 92-112 (GLYHIPFIACMTQLFFFIVLV) threads the bilayer. Cysteine 101 and cysteine 193 form a disulfide bridge. Over 113-141 (GTECILLASMAYDRYVAICRPLHYPVLMR) the chain is Cytoplasmic. A helical membrane pass occupies residues 142–162 (PQVCLGLAMISWLGGLLVSMI). Residues 163–195 (KTTCIATLSYCGPNVLNHFFCDVSPLLNLSCTH) lie on the Extracellular side of the membrane. An N-linked (GlcNAc...) asparagine glycan is attached at asparagine 190. A helical transmembrane segment spans residues 196-216 (VALTELVDFISAIVILWGCFL). Topologically, residues 217–241 (TTMASYVAIGRAVLRMPSTTARYKA) are cytoplasmic. The helical transmembrane segment at 242 to 262 (FSTCASHLVVVGIFYSVTIFI) threads the bilayer. Residues 263–275 (YARPKRIEAMDLN) lie on the Extracellular side of the membrane. A helical transmembrane segment spans residues 276-296 (KVLSVIYTVVTPMCNPVIYCL). Residues 297–312 (RNKEVQVALHRTMHWS) are Cytoplasmic-facing.

This sequence belongs to the G-protein coupled receptor 1 family.

Its subcellular location is the cell membrane. Odorant receptor. The polypeptide is Olfactory receptor 6Z7 (Mus musculus (Mouse)).